The chain runs to 494 residues: 4-trimethylaminobutyraldehyde dehydrogenase (494 aa).

N-acetylserine is present on S2. K30 is modified (N6-acetyllysine; alternate). K30 bears the N6-succinyllysine; alternate mark. An N6-succinyllysine modification is found at K59. Residues K180 and 232 to 236 contribute to the NAD(+) site; that span reads GSVPT. The active-site Proton acceptor is E254. C288 acts as the Nucleophile in catalysis. The residue at position 298 (K298) is an N6-acetyllysine. An N6-acetyllysine; alternate modification is found at K303. The residue at position 303 (K303) is an N6-succinyllysine; alternate. K344 bears the N6-acetyllysine mark. An NAD(+)-binding site is contributed by E391.

The protein belongs to the aldehyde dehydrogenase family. Homotetramer.

It is found in the cytoplasm. The protein localises to the cytosol. The catalysed reaction is 4-(trimethylamino)butanal + NAD(+) + H2O = 4-(trimethylamino)butanoate + NADH + 2 H(+). It carries out the reaction an aldehyde + NAD(+) + H2O = a carboxylate + NADH + 2 H(+). It catalyses the reaction 4-aminobutanal + NAD(+) + H2O = 4-aminobutanoate + NADH + 2 H(+). The enzyme catalyses formaldehyde + NAD(+) + H2O = formate + NADH + 2 H(+). The catalysed reaction is acetaldehyde + NAD(+) + H2O = acetate + NADH + 2 H(+). It carries out the reaction imidazole-4-acetaldehyde + NAD(+) + H2O = imidazole-4-acetate + NADH + 2 H(+). It catalyses the reaction acrolein + NAD(+) + H2O = acrylate + NADH + 2 H(+). The enzyme catalyses (5-hydroxyindol-3-yl)acetaldehyde + NAD(+) + H2O = (5-hydroxyindol-3-yl)acetate + NADH + 2 H(+). The catalysed reaction is 3,4-dihydroxyphenylacetaldehyde + NAD(+) + H2O = 3,4-dihydroxyphenylacetate + NADH + 2 H(+). It carries out the reaction spermine monoaldehyde + NAD(+) + H2O = N-(2-carboxyethyl)spermidine + NADH + 2 H(+). It catalyses the reaction propanal + NAD(+) + H2O = propanoate + NADH + 2 H(+). The enzyme catalyses butanal + NAD(+) + H2O = butanoate + NADH + 2 H(+). The catalysed reaction is pentanal + NAD(+) + H2O = pentanoate + NADH + 2 H(+). It carries out the reaction hexanal + NAD(+) + H2O = hexanoate + NADH + 2 H(+). The protein operates within amine and polyamine biosynthesis; carnitine biosynthesis. In terms of biological role, converts gamma-trimethylaminobutyraldehyde into gamma-butyrobetaine with high efficiency (in vitro). Can catalyze the irreversible oxidation of a broad range of aldehydes to the corresponding acids in an NAD-dependent reaction, but with low efficiency. Catalyzes the oxidation of aldehydes arising from biogenic amines and polyamines. This is 4-trimethylaminobutyraldehyde dehydrogenase (ALDH9A1) from Sus scrofa (Pig).